A 418-amino-acid chain; its full sequence is Ankyrin repeat and SOCS box protein 6 (418 aa).

ANK repeat units follow at residues 65 to 95 (EGVS…NLNF), 100 to 129 (TYYT…DINR), 134 to 164 (HESS…DVNA), 168 to 203 (NGKT…DVKA), 224 to 253 (CGDK…DPSE), and 258 to 287 (ESLT…AYNC). One can recognise an SOCS box domain in the interval 358 to 413 (ALHASLRQLESYPPPLKHLCRVSIRLCLRPWPVDTKVKALPLPDRLKWYLLSAHSD).

Belongs to the ankyrin SOCS box (ASB) family. In terms of assembly, binds APS. Identified in a complex with ELOB and ELOC. Interacts with CUL5 and RNF7. Interacts with SQSTM1. Detected in adipocytes.

The protein resides in the cytoplasm. It participates in protein modification; protein ubiquitination. Functionally, probable substrate-recognition component of a SCF-like ECS (Elongin-Cullin-SOCS-box protein) E3 ubiquitin-protein ligase complex which mediates the ubiquitination and subsequent proteasomal degradation of target proteins. May play a role in the regulation of cell proliferation and autophagy by promoting the ubiquitination and degradation of SQSTM1. The polypeptide is Ankyrin repeat and SOCS box protein 6 (Asb6) (Mus musculus (Mouse)).